Reading from the N-terminus, the 117-residue chain is MGWSWIFLFLLSGTAGVHSEVQLQQSGPELVKPGASVKISCKASGYTFTDYNMHWVKQSHGKSLEWIGYIYPYNGGTGYNQKFKSKATLTVDNSSSTAYMELSSLTSEDSAVYYCAR.

The first 19 residues, 1 to 19 (MGWSWIFLFLLSGTAGVHS), serve as a signal peptide directing secretion. The region spanning 20-117 (EVQLQQSGPE…EDSAVYYCAR (98 aa)) is the Ig-like domain.

This Mus musculus (Mouse) protein is Ig heavy chain V region 108A (Igh-VJ558).